The following is a 258-amino-acid chain: Isoprenyl transferase (258 aa).

Asp-38 is an active-site residue. Position 38 (Asp-38) interacts with Mg(2+). Residues Gly-39–Arg-42, Trp-43, Arg-51, His-55, and Ser-83–Glu-85 contribute to the substrate site. Asn-86 acts as the Proton acceptor in catalysis. Substrate-binding positions include Trp-87, Arg-89, Arg-206, and Arg-212 to Ser-214. Glu-225 contributes to the Mg(2+) binding site.

Belongs to the UPP synthase family. Homodimer. Mg(2+) is required as a cofactor.

In terms of biological role, catalyzes the condensation of isopentenyl diphosphate (IPP) with allylic pyrophosphates generating different type of terpenoids. The polypeptide is Isoprenyl transferase (Bacillus anthracis).